The chain runs to 694 residues: Inactive protein-arginine deiminase type-6 (694 aa).

Phosphoserine is present on residues S10 and S446.

This sequence belongs to the protein arginine deiminase family. In terms of assembly, homodimers. Associates with alpha-tubulin. Post-translationally, phosphorylation at Ser-10, possibly by RSK-type kinases, and Ser-446 creates binding sites for 14-3-3 proteins. As to expression, highly expressed in oocytes and weakly expressed in other somatic tissues.

It is found in the cytoplasm. The protein localises to the cytoplasmic vesicle. The protein resides in the secretory vesicle. It localises to the cortical granule. Its subcellular location is the nucleus. In terms of biological role, structural constituent of cytoplasmic lattices, which plays a key role in early embryonic development. Cytoplasmic lattices consist in fibrous structures found in the cytoplasm of oocytes and preimplantation embryos. They are required to store maternal proteins critical for embryonic development, such as ribosomal proteins and proteins that control epigenetic reprogramming of the preimplantation embryo, and prevent their degradation or activation. In contrast to other members of the family, does not show protein-arginine deiminase activity due to its inability to bind Ca(2+). In Homo sapiens (Human), this protein is Inactive protein-arginine deiminase type-6.